The sequence spans 156 residues: MNMNATLLGQAISFGMFVWFCMKYVWPPIIKAIEDRQKKIADGLQAAERAKKDLDLAQANASDQLKEAKRTATELIEQANKRKAQIIDEAREEAQAERQKILTQAEAEIEAERNRARDELRKQVATLAIAGAEKILERSIDKDTHKDILDNITAKL.

Residues 7–29 (LLGQAISFGMFVWFCMKYVWPPI) form a helical membrane-spanning segment.

This sequence belongs to the ATPase B chain family. As to quaternary structure, F-type ATPases have 2 components, F(1) - the catalytic core - and F(0) - the membrane proton channel. F(1) has five subunits: alpha(3), beta(3), gamma(1), delta(1), epsilon(1). F(0) has three main subunits: a(1), b(2) and c(10-14). The alpha and beta chains form an alternating ring which encloses part of the gamma chain. F(1) is attached to F(0) by a central stalk formed by the gamma and epsilon chains, while a peripheral stalk is formed by the delta and b chains.

It localises to the cell inner membrane. Functionally, f(1)F(0) ATP synthase produces ATP from ADP in the presence of a proton or sodium gradient. F-type ATPases consist of two structural domains, F(1) containing the extramembraneous catalytic core and F(0) containing the membrane proton channel, linked together by a central stalk and a peripheral stalk. During catalysis, ATP synthesis in the catalytic domain of F(1) is coupled via a rotary mechanism of the central stalk subunits to proton translocation. In terms of biological role, component of the F(0) channel, it forms part of the peripheral stalk, linking F(1) to F(0). The chain is ATP synthase subunit b from Vibrio cholerae serotype O1 (strain ATCC 39541 / Classical Ogawa 395 / O395).